A 515-amino-acid polypeptide reads, in one-letter code: Protein DETOXIFICATION 42 (515 aa).

The Cytoplasmic portion of the chain corresponds to M1–E35. A helical membrane pass occupies residues I36–V56. At D57–T58 the chain is on the extracellular side. The helical transmembrane segment at A59–F79 threads the bilayer. Topologically, residues N80 to S168 are cytoplasmic. A helical membrane pass occupies residues S169–A189. Residues K190–Y211 are Extracellular-facing. Residues L212 to F232 form a helical membrane-spanning segment. Topologically, residues R233–L242 are cytoplasmic. The chain crosses the membrane as a helical span at residues F243–F263. Residues R264–G266 are Extracellular-facing. A helical transmembrane segment spans residues V267–W287. Residues K288 to G312 lie on the Cytoplasmic side of the membrane. A helical membrane pass occupies residues F313–A333. The Extracellular segment spans residues A334–Q349. A helical membrane pass occupies residues V350–A370. Topologically, residues S371–Q390 are cytoplasmic. The chain crosses the membrane as a helical span at residues L391–A411. The Extracellular portion of the chain corresponds to R412–L423. A helical membrane pass occupies residues I424 to F444. The Cytoplasmic portion of the chain corresponds to D445–D453. Residues F454–F474 form a helical membrane-spanning segment. Over L475–G480 the chain is Extracellular. Residues F481–W501 form a helical membrane-spanning segment. At R502–S515 the chain is on the cytoplasmic side.

This sequence belongs to the multi antimicrobial extrusion (MATE) (TC 2.A.66.1) family. As to expression, expressed in roots, but not in shoots. Detected in the mature regions of the root, extending from above the root-hair region to the root-shoot junction.

The protein resides in the cell membrane. Functionally, citrate transporter critical for aluminum tolerance. Responsible for citrate exudation into the rhizosphere to protect roots from aluminum toxicity. This Arabidopsis thaliana (Mouse-ear cress) protein is Protein DETOXIFICATION 42.